A 117-amino-acid chain; its full sequence is Replication initiation control protein YabA (117 aa).

Positions 45–81 (NQHLRERLDQSDRDKSSETENDSAQKPGHSDIGEGHD) are disordered. Basic and acidic residues-rich tracts occupy residues 46 to 62 (QHLR…KSSE) and 72 to 81 (GHSDIGEGHD). Residues H92, C94, C107, and C110 each coordinate Zn(2+).

Belongs to the YabA family. As to quaternary structure, homotetramer. Interacts with both DnaA and DnaN, acting as a bridge between these two proteins. Zn(2+) is required as a cofactor.

It is found in the cytoplasm. It localises to the nucleoid. Involved in control of chromosome replication initiation. Inhibits the cooperative binding of DnaA to the oriC region, thus negatively regulating initiation of chromosome replication. Inhibits the ability of DnaA-ATP to form a helix on DNA; does not disassemble preformed DnaA-DNA helices. Decreases the residence time of DnaA on the chromosome at its binding sites (oriC, replication forks and promoter-binding sites). Tethers DnaA to the replication machinery via the DNA polymerase beta sliding clamp subunit (dnaN). Associates with oriC and other DnaA targets on the chromosome in a DnaA-dependent manner. The chain is Replication initiation control protein YabA from Bacillus pumilus (strain SAFR-032).